Here is a 137-residue protein sequence, read N- to C-terminus: Early nodulin-55-1 (137 aa).

The Phytocyanin domain maps to 1–67; it reads KYDERTESVH…GLKLMVVVMS (67 aa). Residues Asn13, Asn51, and Asn68 are each glycosylated (N-linked (GlcNAc...) asparagine). Cys20 and Cys55 are disulfide-bonded. Positions 70–115 are disordered; it reads TKKKLIHSPSPSSPSPSPSPSPSPSPSPSPSLSSPSPSPLPNNQGV. The span at 80–98 shows a compositional bias: pro residues; it reads PSSPSPSPSPSPSPSPSPS.

The protein belongs to the early nodulin-like (ENODL) family.

It is found in the symbiosome. Its subcellular location is the peribacteroid membrane. In terms of biological role, may act as a carbohydrate transporter. The sequence is that of Early nodulin-55-1 from Glycine max (Soybean).